Here is a 297-residue protein sequence, read N- to C-terminus: Transcriptional regulator protein Pur-beta (297 aa).

Disordered stretches follow at residues 1–26 and 275–297; these read MADG…EQET and QERH…VDDD. Ala-2 bears the N-acetylalanine mark. The tract at residues 23-246 is DNA-binding; that stretch reads EQETQELASK…LRVSEVKPSY (224 aa). A compositionally biased stretch (basic and acidic residues) spans 275 to 288; the sequence is QERHRDKMYERREE.

It belongs to the PUR DNA-binding protein family.

The protein localises to the nucleus. In terms of biological role, transcriptional regulator which can act as an activator or a repressor. This is Transcriptional regulator protein Pur-beta (purb) from Danio rerio (Zebrafish).